We begin with the raw amino-acid sequence, 686 residues long: XK-related protein 5 (686 aa).

The next 5 helical transmembrane spans lie at 33–53, 205–225, 239–259, 265–285, and 297–317; these read LLWG…QALS, HFWV…WLVA, LFNL…WDSP, VTFY…ATDF, and IAGV…YYSL. Disordered stretches follow at residues 340–362, 444–470, and 490–589; these read DKTE…ESSG, LQRK…NSSA, and FASD…VGLA. 2 stretches are compositionally biased toward polar residues: residues 455-470 and 490-509; these read LPSS…NSSA and FASD…TQGE. Gly residues predominate over residues 523 to 536; that stretch reads QGKGTGGQQRGGEG. Positions 550-567 are enriched in polar residues; sequence VATSSQQEGSPATLQTAH.

The protein belongs to the XK family.

It localises to the cell membrane. This Pan troglodytes (Chimpanzee) protein is XK-related protein 5.